We begin with the raw amino-acid sequence, 400 residues long: MQRRRRAPPASQPAQDSGHSEEVEVQFSAGRLGSAAPAGPPVRGTAEDEERLEREHFWKVINAFRYYGTSMHERVNRTERQFRSLPDNQQKLLPQFPLHLDKIRKCVDHNQEILLTIVNDCIHMFENKEYGEDANGKIMPASTFDMDKLKSTLKQFVRDWSGTGKAERDACYKPIIKEIIKNFPKERWDPSKVNILVPGAGLGRLAWEIAMLGYACQGNEWSFFMLFSSNFVLNRCSEVDKYKLYPWIHQFSNNRRSADQIRPIFFPDVDPHSLPPGSNFSMTAGDFQEIYSECNTWDCIATCFFIDTAHNVIDYIDTIWRILKPGGIWINLGPLLYHFENLANELSIELSYEDIKNVVLQYGFQLEVEKESVLSTYTVNDLSMMKYYYECVLFVVRKPQ.

The segment at 1-49 (MQRRRRAPPASQPAQDSGHSEEVEVQFSAGRLGSAAPAGPPVRGTAEDE) is disordered. S-adenosyl-L-methionine-binding residues include Gln155, Arg158, Gly199, Glu220, Asp286, Phe287, and Cys303. Carnosine is bound at residue Asp307. Tyr315 is a binding site for S-adenosyl-L-methionine. 2 residues coordinate carnosine: His338 and Tyr389.

Belongs to the carnosine N-methyltransferase family. As to quaternary structure, homodimer. Each monomer accommodates one molecule of carnosine in its active pocket, precisely anchoring the histidine imidazole ring such that only N1 is exposed and deprotonated for methylation. As to expression, expressed at higher level in skeletal muscle compared to other tissues.

The protein localises to the cytoplasm. It is found in the cytosol. It localises to the nucleus. It catalyses the reaction carnosine + S-adenosyl-L-methionine = anserine + S-adenosyl-L-homocysteine + H(+). Its function is as follows. N-methyltransferase that catalyzes the formation of anserine (beta-alanyl-N(Pi)-methyl-L-histidine) from carnosine. Anserine, a methylated derivative of carnosine (beta-alanyl-L-histidine), is an abundant constituent of vertebrate skeletal muscles. Also methylates other L-histidine-containing di- and tripeptides such as Gly-Gly-His, Gly-His and homocarnosine (GABA-His). The polypeptide is Carnosine N-methyltransferase (Rattus norvegicus (Rat)).